The chain runs to 373 residues: Transmembrane protein adipocyte-associated 1 (373 aa).

N-linked (GlcNAc...) asparagine glycosylation is found at N11 and N23. 7 helical membrane-spanning segments follow: residues 48–68, 76–96, 123–143, 151–171, 192–212, 234–254, and 265–285; these read LLLLIPNVLFLIFLLWKLPSA, SSPIFITFYILVFVVALVGIA, FFLLAIELSVIILGLAFGHLE, VLAITTVLSLAYSVTQGTLEI, QFWLVSSCFFFLVYSLVVILP, ILALLNLLQGLGSVLLCFDII, and FLYFSFFAPLIYVAFLRGFFG. Residue N361 is glycosylated (N-linked (GlcNAc...) asparagine).

It belongs to the UPF0359 family. As to expression, ubiquitous, with higher levels in heart, placenta and kidney.

The protein resides in the membrane. The sequence is that of Transmembrane protein adipocyte-associated 1 (TPRA1) from Homo sapiens (Human).